The primary structure comprises 377 residues: tRNA-queuosine alpha-mannosyltransferase (377 aa).

The protein belongs to the glycosyltransferase group 1 family. Glycosyltransferase 4 subfamily.

It catalyses the reaction queuosine(34) in tRNA(Asp) + GDP-alpha-D-mannose = O-4''-alpha-D-mannosylqueuosine(34) in tRNA(Asp) + GDP + H(+). Glycosyltransferase that specifically catalyzes mannosylation of cytoplasmic tRNA(Asp) modified with queuosine at position 34 (queuosine(34)). Mannosylates the cyclopentene moiety of queuosine(34) in tRNA(Asp) to form mannosyl-queuosine(34). This Drosophila melanogaster (Fruit fly) protein is tRNA-queuosine alpha-mannosyltransferase.